The primary structure comprises 136 residues: Protein PsiE homolog (136 aa).

Helical transmembrane passes span Ala15–Leu35, Val58–Phe78, Phe82–Ile102, and Pro108–Cys128.

Belongs to the PsiE family.

Its subcellular location is the cell inner membrane. This is Protein PsiE homolog from Klebsiella pneumoniae subsp. pneumoniae (strain ATCC 700721 / MGH 78578).